Here is a 509-residue protein sequence, read N- to C-terminus: Dihydrolipoyl dehydrogenase, mitochondrial (509 aa).

The N-terminal 35 residues, 1-35 (MQSWSRVYCSLVKRGHFSRISHGLQGVSVVPLRTY), are a transit peptide targeting the mitochondrion. K66 is modified (N6-acetyllysine; alternate). K66 carries the N6-succinyllysine; alternate modification. Residues 71-80 (EKNETLGGTC) and K89 contribute to the FAD site. Cysteines 80 and 85 form a disulfide. N6-acetyllysine; alternate is present on residues K104, K122, K132, and K143. 4 positions are modified to N6-succinyllysine; alternate: K104, K122, K132, and K143. FAD is bound at residue G154. 2 positions are modified to N6-succinyllysine: K159 and K166. FAD is bound at residue 183–185 (TGS). NAD(+) is bound by residues 220-227 (GAGVIGVE) and E243. N6-succinyllysine is present on residues K273 and K277. V278 provides a ligand contact to NAD(+). Phosphoserine is present on residues S285 and S297. NAD(+) is bound at residue G314. K346 is subject to N6-acetyllysine. Residues D355 and 361–364 (MLAH) contribute to the FAD site. K410 carries the N6-acetyllysine; alternate modification. An N6-succinyllysine; alternate modification is found at K410. 2 positions are modified to N6-acetyllysine: K417 and K420. K430 is subject to N6-succinyllysine. H487 serves as the catalytic Proton acceptor. K505 carries the N6-acetyllysine; alternate modification. K505 carries the N6-succinyllysine; alternate modification.

The protein belongs to the class-I pyridine nucleotide-disulfide oxidoreductase family. In terms of assembly, homodimer. Part of the multimeric pyruvate dehydrogenase complex that contains multiple copies of pyruvate dehydrogenase (subunits PDHA (PDHA1 or PDHA2) and PDHB, E1), dihydrolipoamide acetyltransferase (DLAT, E2) and lipoamide dehydrogenase (DLD, E3). These subunits are bound to an inner core composed of about 48 DLAT and 12 PDHX molecules (by non covalent bonds). The 2-oxoglutarate dehydrogenase complex is composed of OGDH (2-oxoglutarate dehydrogenase; E1), DLST (dihydrolipoamide succinyltransferase; E2), DLD (dihydrolipoamide dehydrogenase; E3) and the assembly factor KGD4. It contains multiple copies of the three enzymatic components (E1, E2 and E3). In the nucleus, the 2-oxoglutarate dehydrogenase complex associates with KAT2A. Interacts with PDHX. It depends on FAD as a cofactor. Post-translationally, tyrosine phosphorylated.

Its subcellular location is the mitochondrion matrix. It localises to the nucleus. It is found in the cell projection. The protein resides in the cilium. The protein localises to the flagellum. Its subcellular location is the cytoplasmic vesicle. It localises to the secretory vesicle. It is found in the acrosome. The catalysed reaction is N(6)-[(R)-dihydrolipoyl]-L-lysyl-[protein] + NAD(+) = N(6)-[(R)-lipoyl]-L-lysyl-[protein] + NADH + H(+). In terms of biological role, lipoamide dehydrogenase is a component of the glycine cleavage system as well as an E3 component of three alpha-ketoacid dehydrogenase complexes (pyruvate-, alpha-ketoglutarate-, and branched-chain amino acid-dehydrogenase complex). The 2-oxoglutarate dehydrogenase complex is mainly active in the mitochondrion. A fraction of the 2-oxoglutarate dehydrogenase complex also localizes in the nucleus and is required for lysine succinylation of histones: associates with KAT2A on chromatin and provides succinyl-CoA to histone succinyltransferase KAT2A. In monomeric form may have additional moonlighting function as serine protease. Involved in the hyperactivation of spermatazoa during capacitation and in the spermatazoal acrosome reaction. The polypeptide is Dihydrolipoyl dehydrogenase, mitochondrial (DLD) (Bos taurus (Bovine)).